A 299-amino-acid chain; its full sequence is Formin-like protein 12 (299 aa).

Residues 1–295 (MASNCEKMLS…LEKRKMNIKQ (295 aa)) form the FH2 domain.

Belongs to the formin-like family. Class-II subfamily.

The sequence is that of Formin-like protein 12 (FH12) from Arabidopsis thaliana (Mouse-ear cress).